The following is a 421-amino-acid chain: Probable G-protein coupled receptor 151 (421 aa).

Over Met-1–Ser-44 the chain is Extracellular. Asn-18 carries N-linked (GlcNAc...) asparagine glycosylation. A helical transmembrane segment spans residues Leu-45–Leu-65. The Cytoplasmic portion of the chain corresponds to His-66 to Ser-74. Residues Met-75 to Ala-95 traverse the membrane as a helical segment. At Pro-96–His-122 the chain is on the extracellular side. Cys-114 and Cys-190 are disulfide-bonded. Residues Met-123–Ala-143 traverse the membrane as a helical segment. The Cytoplasmic segment spans residues Ser-144 to Thr-156. A helical transmembrane segment spans residues Ile-157–Phe-177. Residues Phe-178–Leu-204 are Extracellular-facing. Residues Phe-205–Phe-225 form a helical membrane-spanning segment. The Cytoplasmic portion of the chain corresponds to Trp-226–Thr-258. The helical transmembrane segment at Ala-259–Leu-279 threads the bilayer. Topologically, residues Lys-280–Gly-289 are extracellular. The helical transmembrane segment at Phe-290–Leu-310 threads the bilayer. The Cytoplasmic portion of the chain corresponds to Met-311–Asn-421. Disordered stretches follow at residues Ile-346–Val-381 and His-394–Asn-421. 2 stretches are compositionally biased toward basic and acidic residues: residues Asp-364–Asp-379 and Pro-409–Asn-421.

The protein belongs to the G-protein coupled receptor 1 family. Exclusively expressed in neurons of the habenular complex. The expression is particularly prominent in the medial habenular nucleus, whereas the lateral habenular nucleus exhibited a lower level of expression.

The protein localises to the cell membrane. Its function is as follows. Orphan receptor. The chain is Probable G-protein coupled receptor 151 (Gpr151) from Rattus norvegicus (Rat).